The sequence spans 193 residues: Deoxycytidylate deaminase (193 aa).

One can recognise a CMP/dCMP-type deaminase domain in the interval 1–171; sequence MKASTVLQIA…DILRNAGIEV (171 aa). 5 residues coordinate Zn(2+): cysteine 19, cysteine 49, histidine 94, glutamate 102, and histidine 104. Glutamate 106 acts as the Proton donor in catalysis. Zn(2+) contacts are provided by cysteine 132 and cysteine 135. Substrate is bound at residue tyrosine 153.

The protein belongs to the cytidine and deoxycytidylate deaminase family. As to quaternary structure, homohexamer. It depends on Zn(2+) as a cofactor.

The catalysed reaction is dCMP + H2O + H(+) = dUMP + NH4(+). Its activity is regulated as follows. Allosteric enzyme whose activity is greatly influenced by the end products of its metabolic pathway, dCTP and dTTP. In terms of biological role, supplies the nucleotide substrate for thymidylate synthetase. This chain is Deoxycytidylate deaminase (CD), found in Escherichia coli (Bacteriophage T4).